A 185-amino-acid chain; its full sequence is Ribosome-recycling factor (185 aa).

This sequence belongs to the RRF family.

It localises to the cytoplasm. Functionally, responsible for the release of ribosomes from messenger RNA at the termination of protein biosynthesis. May increase the efficiency of translation by recycling ribosomes from one round of translation to another. This Chloroflexus aurantiacus (strain ATCC 29364 / DSM 637 / Y-400-fl) protein is Ribosome-recycling factor.